A 610-amino-acid chain; its full sequence is Glutamine--fructose-6-phosphate aminotransferase [isomerizing] (610 aa).

Cysteine 2 functions as the Nucleophile; for GATase activity in the catalytic mechanism. Residues 2–217 (CGIVGYVGQK…DKEFVVLTND (216 aa)) enclose the Glutamine amidotransferase type-2 domain. SIS domains are found at residues 284 to 424 (ITKE…LKGS) and 453 to 600 (LIKE…VDKP). Lysine 605 (for Fru-6P isomerization activity) is an active-site residue.

Homodimer.

It is found in the cytoplasm. It carries out the reaction D-fructose 6-phosphate + L-glutamine = D-glucosamine 6-phosphate + L-glutamate. Functionally, catalyzes the first step in hexosamine metabolism, converting fructose-6P into glucosamine-6P using glutamine as a nitrogen source. The protein is Glutamine--fructose-6-phosphate aminotransferase [isomerizing] of Clostridium perfringens (strain 13 / Type A).